A 122-amino-acid chain; its full sequence is Small ribosomal subunit protein uS8c (122 aa).

Belongs to the universal ribosomal protein uS8 family. As to quaternary structure, part of the 30S ribosomal subunit.

It is found in the plastid. It localises to the chloroplast. Its function is as follows. One of the primary rRNA binding proteins, it binds directly to 16S rRNA central domain where it helps coordinate assembly of the platform of the 30S subunit. This chain is Small ribosomal subunit protein uS8c (rps8), found in Ostreococcus tauri.